A 446-amino-acid polypeptide reads, in one-letter code: Alkylglycerol monooxygenase (446 aa).

2 helical membrane passes run 43–63 and 110–130; these read ATVY…AWKG and WDSP…YYWF. The Fatty acid hydroxylase domain maps to 118–248; the sequence is LTFLGVDFGY…LIIWDRMFGT (131 aa). The Histidine box-1 signature appears at 131 to 135; the sequence is HRMAH. Residues 144–148 carry the Histidine box-2 motif; it reads HQTHH. The helical transmembrane segment at 167–187 threads the bilayer; the sequence is YFSWMFYWPMAFCIPPSVFAV. Residues 220 to 224 carry the Histidine box-3 motif; the sequence is HRVHH. The next 3 helical transmembrane spans lie at 339 to 359, 362 to 382, and 412 to 434; these read MMHF…KLIL, ATLL…GFIF, and VPYL…GLKA.

Belongs to the sterol desaturase family. TMEM195 subfamily. Fe cation serves as cofactor.

The protein resides in the endoplasmic reticulum membrane. The catalysed reaction is 1-O-(1,2-saturated-alkyl)-sn-glycerol + (6R)-L-erythro-5,6,7,8-tetrahydrobiopterin + O2 = a 1-(1-hydroxyalkyl)-sn-glycerol + (6R)-L-erythro-6,7-dihydrobiopterin + H2O. Glyceryl-ether monooxygenase that cleaves the O-alkyl bond of ether lipids. Ether lipids are essential components of brain membranes. The sequence is that of Alkylglycerol monooxygenase (agmo) from Xenopus tropicalis (Western clawed frog).